The primary structure comprises 871 residues: Espin (871 aa).

ANK repeat units lie at residues Met1 to Leu31, Leu35 to Arg66, Asn69 to Glu99, Ser103 to Ala132, Thr137 to Ala167, Asn171 to Leu201, Asp205 to Glu235, Asp239 to Gln268, and Trp271 to Val300. Phosphoserine occurs at positions 338 and 342. 4 disordered regions span residues Gln349 to Pro400, Pro416 to His469, Lys493 to Val750, and Glu819 to Tyr850. A compositionally biased stretch (polar residues) spans Ser352–Pro365. A compositionally biased stretch (low complexity) spans Phe377–Ser395. Residues Pro428 to Pro465 show a composition bias toward pro residues. Residues Ser517, Ser524, and Ser556 each carry the phosphoserine modification. The segment covering Gln522–Gln548 has biased composition (basic and acidic residues). Over residues Leu606–Pro629 the composition is skewed to pro residues. Polar residues-rich tracts occupy residues Lys659–Asn670 and Pro685–Glu707. Residue Ser665 is modified to Phosphoserine. One can recognise a WH2 domain in the interval Asp669 to Thr686. Phosphoserine occurs at positions 704, 708, and 714. The stretch at Lys772 to Leu848 forms a coiled coil.

As to quaternary structure, monomer. Binds F-actin in a Ca(2+)-resistant fashion. Interacts (via N-terminus) with BAIAP2 (via SH3-domain). Interacts with PFN2. Interacts with MYO3A (via C-terminus). Interacts with MYO3B (via C-terminus). As to expression, expressed at high concentration in the microvillar parallel actin bundle (PAB) of hair cells stereocilia in the cochlea and vestibular system. Detected also at high levels of a number of other sensory cell types, including taste receptor cells, solitary chemoreceptor cells, vomeronasal sensory neurons and Merkel cells. Isoforms 2, 3, 4 and 5 are expressed in Purkinje cells dendritic spines. Expressed in utricle hair bundles (at protein level).

It is found in the cytoplasm. The protein localises to the cytoskeleton. The protein resides in the cell projection. Its subcellular location is the stereocilium. It localises to the microvillus. It is found in the cell junction. The protein localises to the dendritic spine. Multifunctional actin-bundling protein. Plays a major role in regulating the organization, dimension, dynamics and signaling capacities of the actin filament-rich microvilli in the mechanosensory and chemosensory cells. Required for the assembly and stabilization of the stereociliary parallel actin bundles. Plays a crucial role in the formation and maintenance of inner ear hair cell stereocilia. Involved in the elongation of actin in stereocilia. In extrastriolar hair cells, required for targeting MYO3B to stereocilia tips, and for regulation of stereocilia diameter and staircase formation. The chain is Espin (Espn) from Mus musculus (Mouse).